A 1179-amino-acid chain; its full sequence is ATP-dependent helicase/deoxyribonuclease subunit B (1179 aa).

Belongs to the helicase family. AddB/RexB type 2 subfamily. As to quaternary structure, heterodimer of AddA and RexB. Mg(2+) serves as cofactor.

Its function is as follows. The heterodimer acts as both an ATP-dependent DNA helicase and an ATP-dependent, dual-direction single-stranded exonuclease. Recognizes the chi site generating a DNA molecule suitable for the initiation of homologous recombination. This subunit has 5' -&gt; 3' nuclease activity but not helicase activity. This chain is ATP-dependent helicase/deoxyribonuclease subunit B, found in Lactobacillus delbrueckii subsp. bulgaricus (strain ATCC BAA-365 / Lb-18).